Here is a 106-residue protein sequence, read N- to C-terminus: Iron-sulfur cluster assembly protein CyaY (106 aa).

Belongs to the frataxin family.

Functionally, involved in iron-sulfur (Fe-S) cluster assembly. May act as a regulator of Fe-S biogenesis. The protein is Iron-sulfur cluster assembly protein CyaY of Salmonella paratyphi B (strain ATCC BAA-1250 / SPB7).